The following is a 472-amino-acid chain: MAGKTLYDKLWDDHVVTQRDDGSCLLYIDRHLLHEVTSPQAFEGLQLAGRQPWRLSANVATPDHNVPTSKKERDQGIAGIEDDTSRIQVQTLDDNCKAFNIVEFGINDIRQGIVHVVGPEQGLTLPGMTVVCGDSHTATHGAFGCLAHGIGTSEVEHVLATQCLVQKKSKNMLVRVDGVLGKGVTPKDVVLAIIGKIGTAGGTGYAIEFGGQVFRDMSIEGRMTVCNMAIEAGARVGMVAVDDKTIEYVKGRSYAPKGEQWEQAVAYWNTLHSDVDAVFDAVVELNGAEIEPQVSWGTSPEMVIPVSKAVPTLEQAKDDVQRNDWTRAYQYMGLNAGQALADIQLDRVFIGSCTNSRIEDIRAAAEVVKGRKVAPSIKQAMIVPGSGLVKQQAEKEGLDKIFLEAGFEWREPGCSMCLAMNADKLQPGEHCASTSNRNFEGRQGNGGRTHLVSPAMAAAAAIAGHFVDVRSF.

Residues Cys-353, Cys-414, and Cys-417 each coordinate [4Fe-4S] cluster.

It belongs to the aconitase/IPM isomerase family. LeuC type 1 subfamily. As to quaternary structure, heterodimer of LeuC and LeuD. [4Fe-4S] cluster is required as a cofactor.

The catalysed reaction is (2R,3S)-3-isopropylmalate = (2S)-2-isopropylmalate. Its pathway is amino-acid biosynthesis; L-leucine biosynthesis; L-leucine from 3-methyl-2-oxobutanoate: step 2/4. Functionally, catalyzes the isomerization between 2-isopropylmalate and 3-isopropylmalate, via the formation of 2-isopropylmaleate. This is 3-isopropylmalate dehydratase large subunit from Acinetobacter baumannii (strain ACICU).